We begin with the raw amino-acid sequence, 418 residues long: 3-isopropylmalate dehydratase large subunit (418 aa).

Positions 299, 359, and 362 each coordinate [4Fe-4S] cluster.

It belongs to the aconitase/IPM isomerase family. LeuC type 2 subfamily. Heterodimer of LeuC and LeuD. [4Fe-4S] cluster serves as cofactor.

The enzyme catalyses (2R,3S)-3-isopropylmalate = (2S)-2-isopropylmalate. It participates in amino-acid biosynthesis; L-leucine biosynthesis; L-leucine from 3-methyl-2-oxobutanoate: step 2/4. Catalyzes the isomerization between 2-isopropylmalate and 3-isopropylmalate, via the formation of 2-isopropylmaleate. This is 3-isopropylmalate dehydratase large subunit from Nitratidesulfovibrio vulgaris (strain DSM 19637 / Miyazaki F) (Desulfovibrio vulgaris).